Consider the following 118-residue polypeptide: Large ribosomal subunit protein bL20 (118 aa).

Belongs to the bacterial ribosomal protein bL20 family.

Binds directly to 23S ribosomal RNA and is necessary for the in vitro assembly process of the 50S ribosomal subunit. It is not involved in the protein synthesizing functions of that subunit. The sequence is that of Large ribosomal subunit protein bL20 from Yersinia enterocolitica serotype O:8 / biotype 1B (strain NCTC 13174 / 8081).